A 516-amino-acid chain; its full sequence is Apolipoprotein N-acyltransferase (516 aa).

A run of 6 helical transmembrane segments spans residues 24-44, 58-78, 90-110, 125-145, 163-183, and 192-212; these read LAQA…LLYL, GWCY…ISIH, LLTL…AWLW, LAFA…LTGF, APLG…ALLV, and PPAL…GLAL. The 242-residue stretch at 230–471 folds into the CN hydrolase domain; sequence VQGNVEQNLK…RAVLYGEVTP (242 aa). Glutamate 270 functions as the Proton acceptor in the catalytic mechanism. Lysine 331 is an active-site residue. The active-site Nucleophile is the cysteine 383. A helical transmembrane segment spans residues 479–499; the sequence is LRWRAWPLAGLAVLLLGWALL.

Belongs to the CN hydrolase family. Apolipoprotein N-acyltransferase subfamily.

The protein localises to the cell inner membrane. The catalysed reaction is N-terminal S-1,2-diacyl-sn-glyceryl-L-cysteinyl-[lipoprotein] + a glycerophospholipid = N-acyl-S-1,2-diacyl-sn-glyceryl-L-cysteinyl-[lipoprotein] + a 2-acyl-sn-glycero-3-phospholipid + H(+). Its pathway is protein modification; lipoprotein biosynthesis (N-acyl transfer). Its function is as follows. Catalyzes the phospholipid dependent N-acylation of the N-terminal cysteine of apolipoprotein, the last step in lipoprotein maturation. This Azotobacter vinelandii (strain DJ / ATCC BAA-1303) protein is Apolipoprotein N-acyltransferase.